We begin with the raw amino-acid sequence, 248 residues long: 2,3-bisphosphoglycerate-dependent phosphoglycerate mutase (248 aa).

Substrate-binding positions include Arg-8–Asn-15, Thr-21–Gly-22, Arg-60, Glu-87–Tyr-90, Lys-98, Arg-114–Arg-115, and Gly-183–Asn-184. The Tele-phosphohistidine intermediate role is filled by His-9. Glu-87 functions as the Proton donor/acceptor in the catalytic mechanism.

It belongs to the phosphoglycerate mutase family. BPG-dependent PGAM subfamily.

It catalyses the reaction (2R)-2-phosphoglycerate = (2R)-3-phosphoglycerate. The protein operates within carbohydrate degradation; glycolysis; pyruvate from D-glyceraldehyde 3-phosphate: step 3/5. Functionally, catalyzes the interconversion of 2-phosphoglycerate and 3-phosphoglycerate. This chain is 2,3-bisphosphoglycerate-dependent phosphoglycerate mutase, found in Borrelia turicatae (strain 91E135).